A 51-amino-acid chain; its full sequence is MKMKTNKYMNMVRPAPPRRADPEGVRDPSTMGGGPNPFLRRSPYMYINKKK.

The tract at residues 1-42 (MKMKTNKYMNMVRPAPPRRADPEGVRDPSTMGGGPNPFLRRS) is disordered.

The protein localises to the mitochondrion. This is an uncharacterized protein from Saccharomyces cerevisiae (strain ATCC 204508 / S288c) (Baker's yeast).